A 419-amino-acid polypeptide reads, in one-letter code: Ribosome biogenesis protein WDR12 homolog (419 aa).

A ubiquitin-like (UBL) domain region spans residues 10–91 (VQVHLKTKQE…EDAIEIEYVE (82 aa)). WD repeat units follow at residues 103–141 (LHDD…LTIP), 142–184 (GHTA…NTVE), 191–230 (GHER…AGEG), 249–287 (GHRE…IKAE), 289–328 (STNK…GSVV), 334–374 (GHNA…APLY), and 378–416 (GHGE…VENM).

This sequence belongs to the WD repeat WDR12/YTM1 family.

The protein localises to the nucleus. It is found in the nucleolus. The protein resides in the nucleoplasm. In terms of biological role, required for maturation of ribosomal RNAs and formation of the large ribosomal subunit. The polypeptide is Ribosome biogenesis protein WDR12 homolog (Drosophila pseudoobscura pseudoobscura (Fruit fly)).